The chain runs to 114 residues: MGIRPTLQTNPLVDLLISTSQTQLQNAGLPFPPRSFGCLLVRHSPGCLPGSLWNLPRSRLPSCLPICLPRCRCWLNRERWRKGDDVFSDFCTKFVSTLIGPTSFAFRFVEFFYL.

It belongs to the scolopendra neurotoxin 8 family. Post-translationally, contains 3 disulfide bonds. In terms of tissue distribution, expressed by the venom gland.

The protein localises to the secreted. The chain is Putative neurotoxin 7 from Scolopendra mutilans (Chinese red-headed centipede).